Consider the following 492-residue polypeptide: Stage IV sporulation protein A (492 aa).

A Walker A motif; involved in ATP-binding motif is present at residues glycine 24–serine 31. Position 24–31 (glycine 24–serine 31) interacts with ATP.

The protein localises to the cytoplasm. The enzyme catalyses ATP + H2O = ADP + phosphate + H(+). Its function is as follows. ATPase. Has a role at an early stage in the morphogenesis of the spore coat outer layers. Directs the assembly of the coat and exosporium to an area around the forespore. This chain is Stage IV sporulation protein A, found in Bacillus anthracis.